A 245-amino-acid chain; its full sequence is 2-C-methyl-D-erythritol 4-phosphate cytidylyltransferase (245 aa).

This sequence belongs to the IspD/TarI cytidylyltransferase family. IspD subfamily.

The enzyme catalyses 2-C-methyl-D-erythritol 4-phosphate + CTP + H(+) = 4-CDP-2-C-methyl-D-erythritol + diphosphate. Its pathway is isoprenoid biosynthesis; isopentenyl diphosphate biosynthesis via DXP pathway; isopentenyl diphosphate from 1-deoxy-D-xylulose 5-phosphate: step 2/6. Catalyzes the formation of 4-diphosphocytidyl-2-C-methyl-D-erythritol from CTP and 2-C-methyl-D-erythritol 4-phosphate (MEP). This Chloroherpeton thalassium (strain ATCC 35110 / GB-78) protein is 2-C-methyl-D-erythritol 4-phosphate cytidylyltransferase.